Reading from the N-terminus, the 855-residue chain is Receptor-like protein kinase THESEUS 1 (855 aa).

A signal peptide spans 1-22; the sequence is MVFTKSLLVLLWFLSCYTTTTS. Residues 23–415 lie on the Extracellular side of the membrane; it reads SALFNPPDNY…GGSGSKSKKK (393 aa). N-linked (GlcNAc...) asparagine glycosylation is found at Asn41, Asn64, Asn75, Asn114, Asn118, Asn136, Asn143, Asn154, Asn168, Asn225, Asn242, Asn288, Asn353, and Asn376. A helical transmembrane segment spans residues 416-436; sequence AVIIGSLVGAVTLILLIAVCC. Residues 437–855 are Cytoplasmic-facing; it reads YCCLVASRKQ…FSQLVHPRGR (419 aa). One can recognise a Protein kinase domain in the interval 510–783; that stretch reads FDESSLLGVG…GDVLWNLEYA (274 aa). ATP contacts are provided by residues 516–524 and Lys538; that span reads LGVGGFGRV. Residue Asp634 is the Proton acceptor of the active site. The segment at 822–855 is disordered; it reads IDRGGVNSGTGTDDDAEDATTSAVFSQLVHPRGR.

The protein belongs to the protein kinase superfamily. Ser/Thr protein kinase family. Autophosphorylated. Expressed in most vegetative tissues, including leaves, stems and roots, primarily in expanding cells and vascular tissue.

The protein localises to the cell membrane. Functionally, receptor-like protein kinase required for cell elongation during vegetative growth, mostly in a brassinosteroid-(BR-) independent manner. Mediates the response of growing plant cells to the perturbation of cellulose synthesis and may act as a cell-wall-integrity sensor. Controls ectopic-lignin accumulation in cellulose-deficient mutant backgrounds. This Arabidopsis thaliana (Mouse-ear cress) protein is Receptor-like protein kinase THESEUS 1 (THE1).